Here is a 231-residue protein sequence, read N- to C-terminus: Ribonuclease 3 (231 aa).

An RNase III domain is found at 5 to 134; that stretch reads QKKLKNDYGL…FLGALFIDQG (130 aa). Residue glutamate 47 participates in Mg(2+) binding. Aspartate 51 is an active-site residue. The Mg(2+) site is built by asparagine 120 and glutamate 123. Glutamate 123 is a catalytic residue. Positions 160–229 constitute a DRBM domain; sequence DYKTELQEVL…AENAIKGQNH (70 aa).

It belongs to the ribonuclease III family. In terms of assembly, homodimer. Requires Mg(2+) as cofactor.

Its subcellular location is the cytoplasm. The enzyme catalyses Endonucleolytic cleavage to 5'-phosphomonoester.. Functionally, digests double-stranded RNA. Involved in the processing of primary rRNA transcript to yield the immediate precursors to the large and small rRNAs (23S and 16S). Processes some mRNAs, and tRNAs when they are encoded in the rRNA operon. Processes pre-crRNA and tracrRNA of type II CRISPR loci if present in the organism. The protein is Ribonuclease 3 of Lactococcus lactis subsp. cremoris (strain MG1363).